A 339-amino-acid chain; its full sequence is Alcohol dehydrogenase notN (339 aa).

Zn(2+)-binding residues include Cys44, His65, Glu66, Cys99, Cys102, Cys110, and Cys152. His65 contributes to the an alcohol binding site. NAD(+)-binding positions include 176 to 181 (GLGGLG), 196 to 201 (VAISRG), Lys204, 263 to 265 (LSF), 287 to 289 (PSG), and 295 to 297 (EDA).

Belongs to the zinc-containing alcohol dehydrogenase family. It depends on Zn(2+) as a cofactor.

It carries out the reaction a primary alcohol + NAD(+) = an aldehyde + NADH + H(+). It catalyses the reaction a secondary alcohol + NAD(+) = a ketone + NADH + H(+). Functionally, alcohol dehydrogenase; part of the gene cluster that mediates the biosynthesis of notoamide, a fungal indole alkaloid that belongs to a family of natural products containing a characteristic bicyclo[2.2.2]diazaoctane core. The first step of notoamide biosynthesis involves coupling of L-proline and L-tryptophan by the bimodular NRPS notE, to produce cyclo-L-tryptophan-L-proline called brevianamide F. The reverse prenyltransferase notF then acts as a deoxybrevianamide E synthase and converts brevianamide F to deoxybrevianamide E via reverse prenylation at C-2 of the indole ring leading to the bicyclo[2.2.2]diazaoctane core. Deoxybrevianamide E is further hydroxylated at C-6 of the indole ring, likely catalyzed by the cytochrome P450 monooxygenase notG, to yield 6-hydroxy-deoxybrevianamide E. 6-hydroxy-deoxybrevianamide E is a specific substrate of the prenyltransferase notC for normal prenylation at C-7 to produce 6-hydroxy-7-prenyl-deoxybrevianamide, also called notoamide S. As the proposed pivotal branching point in notoamide biosynthesis, notoamide S can be diverted to notoamide E through an oxidative pyran ring closure putatively catalyzed by either notH cytochrome P450 monooxygenase or the notD FAD-linked oxidoreductase. This step would be followed by an indole 2,3-epoxidation-initiated pinacol-like rearrangement catalyzed by the notB FAD-dependent monooxygenase leading to the formation of notoamide C and notoamide D. On the other hand notoamide S is converted to notoamide T by notH (or notD), a bifunctional oxidase that also functions as the intramolecular Diels-Alderase responsible for generation of (+)-notoamide T. To generate antipodal (-)-notoaminide T, notH' (or notD') in Aspergillus versicolor is expected to catalyze a Diels-Alder reaction leading to the opposite stereochemistry. The remaining oxidoreductase notD (or notH) likely catalyzes the oxidative pyran ring formation to yield (+)-stephacidin A. The FAD-dependent monooxygenase notI is highly similar to notB and is predicted to catalyze a similar conversion from (+)-stephacidin A to (-)-notoamide B via the 2,3-epoxidation of (+)-stephacidin A followed by a pinacol-type rearrangement. Finally, it remains unclear which enzyme could be responsible for the final hydroxylation steps leading to notoamide A and sclerotiamide. The function of notN in the notoamide biosynthesis has not been determined yet. This chain is Alcohol dehydrogenase notN, found in Aspergillus sp. (strain MF297-2).